We begin with the raw amino-acid sequence, 327 residues long: G protein pathway suppressor 2 (327 aa).

Positions 14–109 (MARALHRHIM…RRRKEQSDLT (96 aa)) form a coiled coil. The disordered stretch occupies residues 26–65 (RERKRQEEEEVDKMMEQKMKEEQERRKKKEMEERMSLEET). Residues Lys-45 and Lys-71 each participate in a glycyl lysine isopeptide (Lys-Gly) (interchain with G-Cter in SUMO1) cross-link. Residues 61-94 (SLEETKEQILKLEEKLLALQEEKHQLFLQLKKVL) form an interaction with SUMO region. 2 disordered regions span residues 177 to 208 (HGQF…SPSQ) and 253 to 327 (QKQM…FYHK). Residues 253-271 (QKQMEHANQQTGFSDSSSL) are compositionally biased toward polar residues. Arg-312 carries the post-translational modification Asymmetric dimethylarginine. The segment covering 317-327 (QHSQNPRFYHK) has biased composition (polar residues). Position 323 is an asymmetric dimethylarginine; alternate (Arg-323). An Omega-N-methylarginine; alternate modification is found at Arg-323.

In terms of assembly, component of the N-Cor repressor complex, at least composed of NCOR1, NCOR2, HDAC3, TBL1X, TBL1R, CORO2A and GPS2. Interacts (when sumoylated at Lys-71) with TBL1X; leading to protect GPS2 from degradation by the proteasome. Interacts with UBE2N; leading to inhibit UBE2N/Ubc13 activity. Interacts with TRAF1. Interacts with TRAF2. Interacts with TRAF6. Interacts with PPARG (when in the liganded conformation). Interacts with (sumoylated) NR1H2; interaction with sumoylated NR1H2 and NR5A2 onto hepatic acute phase protein promoters prevents N-Cor corepressor complex dissociation. Interacts with (sumoylated) NR5A2; interaction with sumoylated NR1H2 and NR5A2 onto hepatic acute phase protein promoters prevents N-Cor corepressor complex dissociation. Interacts with NR1H3. Interacts with RFX4. Interacts with ANKRD26. (Microbial infection) Interacts (via coiled coil domain) with hepatitis C virus (HCV) NS5A. Sumoylation regulates its subcellular location. Sumoylation at Lys-45 and Lys-71 regulates the shuttling between the cytoplasm and the nucleus. Sumoylation at Lys-71 is required for interaction with TBL1X. Sumoylated at Lys-45 and Lys-71 in mitochondrion. Desumoylation by SENP1 leads to relocation from the mitochondria to the nucleus. Post-translationally, ubiquitinated at the C-terminus by SIAH2; leading to its degradation by the proteasome. Interaction with TBL1X and methylation at Arg-323 protect GPS2 against ubiquitination and degradation. In terms of processing, methylated at Arg-312 and Arg-323 by PRMT6. Methylation at Arg-323 protects from degradation by the proteasome. As to expression, widely expressed.

It is found in the nucleus. It localises to the mitochondrion. The protein resides in the cytoplasm. Its subcellular location is the cytosol. Key regulator of inflammation, lipid metabolism and mitochondrion homeostasis that acts by inhibiting the activity of the ubiquitin-conjugating enzyme UBE2N/Ubc13, thereby inhibiting 'Lys-63'-linked ubiquitination. In the nucleus, can both acts as a corepressor and coactivator of transcription, depending on the context. Acts as a transcription coactivator in adipocytes by promoting the recruitment of PPARG to promoters: acts by inhibiting the activity of the ubiquitin-conjugating enzyme UBE2N/Ubc13, leading to stabilization of KDM4A and subsequent histone H3 'Lys-9' (H3K9) demethylation. Promotes cholesterol efflux by acting as a transcription coactivator. Acts as a regulator of B-cell development by inhibiting UBE2N/Ubc13, thereby restricting the activation of Toll-like receptors (TLRs) and B-cell antigen receptors (BCRs) signaling pathways. Acts as a key mediator of mitochondrial stress response: in response to mitochondrial depolarization, relocates from the mitochondria to the nucleus following desumoylation and specifically promotes expression of nuclear-encoded mitochondrial genes. Promotes transcription of nuclear-encoded mitochondrial genes by inhibiting UBE2N/Ubc13. Can also act as a corepressor as part of the N-Cor repressor complex by repressing active PPARG. Plays an anti-inflammatory role in macrophages and is required for insulin sensitivity by acting as a corepressor. Plays an anti-inflammatory role during the hepatic acute phase response by interacting with sumoylated NR1H2 and NR5A2 proteins, thereby preventing N-Cor corepressor complex dissociation. In the cytosol, also plays a non-transcriptional role by regulating insulin signaling and pro-inflammatory pathways. In the cytoplasm, acts as a negative regulator of inflammation by inhibiting the pro-inflammatory TNF-alpha pathway; acts by repressing UBE2N/Ubc13 activity. In the cytoplasm of adipocytes, restricts the activation of insulin signaling via inhibition of UBE2N/Ubc13-mediated ubiquitination of AKT. Able to suppress G-protein- and mitogen-activated protein kinase-mediated signal transduction. Acts as a tumor-suppressor in liposarcoma. Its function is as follows. (Microbial infection) Required for efficient replication of hepatitis C virus (HCV) by promoting the interaction between VAPA and HCV virus protein NS5A. The polypeptide is G protein pathway suppressor 2 (Homo sapiens (Human)).